The primary structure comprises 332 residues: 2,3-diketo-L-gulonate reductase (332 aa).

His44 serves as the catalytic Proton donor. Residues 168 to 174 (ITMVDMS), 224 to 225 (WK), and 304 to 306 (GHE) each bind NAD(+).

The protein belongs to the LDH2/MDH2 oxidoreductase family. DlgD subfamily. As to quaternary structure, homodimer.

The protein localises to the cytoplasm. It carries out the reaction 3-dehydro-L-gulonate + NAD(+) = 2,3-dioxo-L-gulonate + NADH + H(+). The enzyme catalyses 3-dehydro-L-gulonate + NADP(+) = 2,3-dioxo-L-gulonate + NADPH + H(+). Functionally, catalyzes the reduction of 2,3-diketo-L-gulonate in the presence of NADH, to form 3-keto-L-gulonate. The chain is 2,3-diketo-L-gulonate reductase from Escherichia coli O8 (strain IAI1).